We begin with the raw amino-acid sequence, 788 residues long: DNA ligase (788 aa).

NAD(+)-binding positions include 35 to 39, 84 to 85, and Glu-124; these read DAEYD and SL. The active-site N6-AMP-lysine intermediate is the Lys-126. 4 residues coordinate NAD(+): Arg-147, Glu-184, Lys-300, and Lys-324. Zn(2+)-binding residues include Cys-418, Cys-421, Cys-448, and Cys-454. Positions 707 to 788 constitute a BRCT domain; that stretch reads AEGLPLAGQT…FIERLAQLGS (82 aa).

This sequence belongs to the NAD-dependent DNA ligase family. LigA subfamily. Requires Mg(2+) as cofactor. Mn(2+) is required as a cofactor.

It catalyses the reaction NAD(+) + (deoxyribonucleotide)n-3'-hydroxyl + 5'-phospho-(deoxyribonucleotide)m = (deoxyribonucleotide)n+m + AMP + beta-nicotinamide D-nucleotide.. DNA ligase that catalyzes the formation of phosphodiester linkages between 5'-phosphoryl and 3'-hydroxyl groups in double-stranded DNA using NAD as a coenzyme and as the energy source for the reaction. It is essential for DNA replication and repair of damaged DNA. This chain is DNA ligase, found in Stutzerimonas stutzeri (strain A1501) (Pseudomonas stutzeri).